The primary structure comprises 511 residues: Maturase K (511 aa).

Belongs to the intron maturase 2 family. MatK subfamily.

It is found in the plastid. Its subcellular location is the chloroplast. Its function is as follows. Usually encoded in the trnK tRNA gene intron. Probably assists in splicing its own and other chloroplast group II introns. The polypeptide is Maturase K (Avena sativa (Oat)).